The primary structure comprises 400 residues: Probable splicing factor YJU2B (400 aa).

Residues 1 to 26 are disordered; that stretch reads MGERKGVNKYYPPDFNPEKHGSLNRY. Ser-40 carries the post-translational modification Phosphoserine. Residues 182-214 are a coiled coil; the sequence is LNSMLRKRFREKKKAMQEEEERDQALQAKASLA. The segment at 255-400 is disordered; that stretch reads WFPSTPGASA…VADYSGSESE (146 aa). The span at 283–292 shows a compositional bias: polar residues; the sequence is RRATPTSSPV. Ser-310 carries the post-translational modification Phosphoserine. Positions 327–341 are enriched in polar residues; sequence EGTNQNRPVSPQDCS. A compositionally biased stretch (pro residues) spans 364-380; the sequence is PQPPPDTSPEAPNPQDT.

The protein belongs to the CWC16 family.

It localises to the nucleus. May be involved in mRNA splicing. The chain is Probable splicing factor YJU2B (YJU2B) from Bos taurus (Bovine).